Reading from the N-terminus, the 656-residue chain is MQYVGRAFDSVTKTWNAINPSTLSGAIDVIVVEQEDKTLACSPFHVRFGKFSLLLPSDKKVEFSVNGQLTGFNMKLGDGGEAFFVFATENAVPRELQTSPIVSPTTSPKQTPSINVTEPQDLELDKVSQDHEKDQSNTYLMEDGYEFPLTRDLIRRSKSDADQTPPTGFKHLRHSSCLEMAGSDRTPSMPATTLADLRLLQKAKELGKRLSGKELPTRVGDNGDVMLDMTGYKSSAANINIAELARETFKDEFPMIEKLLREDEEGNLWFHASEDAKKFAEVYGHSPPASPSRTPASPKSDSALMDEDSDLSRRHSLSEQSLSPVSESYPQYAKTLRLTSDQLRSLNLKPGKNELSFGVNGGKAICTANLFFWKHNDPVVISDIDGTITKSDALGHMFTLIGKDWTHAGVAKLYTDITNNGYKIMYLTSRSVGQADSTRHYLRNIEQNGYSLPDGPVILSPDRTMAALHREVILRKPEVFKMACLRDLCNIFALPVPRTPFYAGFGNRITDAISYNHVRVPPTRIFTINSAGEVHIELLQRSGHRSSYVYMNELVDHFFPPIEVSTRDEVSSFTDVNFWRSPLLELSDEEEDDTNKSTSKSPKTPKNTKFGYQEFEGIDEEDAQDYSPSPLIKSFNELMFEGEEDEEGEEDVENAV.

Phosphoserine is present on residues S99 and S103. Polar residues predominate over residues 99-118; sequence SPIVSPTTSPKQTPSINVTE. The interval 99-121 is disordered; that stretch reads SPIVSPTTSPKQTPSINVTEPQD. T106 carries the post-translational modification Phosphothreonine. 3 positions are modified to phosphoserine: S107, S159, and S286. Disordered stretches follow at residues 282 to 328 and 587 to 656; these read VYGH…VSES and SDEE…ENAV. Over residues 291-300 the composition is skewed to low complexity; the sequence is PSRTPASPKS. Residues S318, S321, and S587 each carry the phosphoserine modification. Over residues 318 to 328 the composition is skewed to polar residues; that stretch reads SEQSLSPVSES. Low complexity predominate over residues 596 to 609; it reads KSTSKSPKTPKNTK. A compositionally biased stretch (acidic residues) spans 640–656; sequence FEGEEDEEGEEDVENAV.

This sequence belongs to the lipin family. Interacts with dis3, pim1 and nup189.

Its function is as follows. May have a role in the maintenance of the nuclear envelope structure and in minichromosome stability. The protein is Nuclear elongation and deformation protein 1 (ned1) of Schizosaccharomyces pombe (strain 972 / ATCC 24843) (Fission yeast).